A 176-amino-acid polypeptide reads, in one-letter code: Large ribosomal subunit protein eL20 (176 aa).

A Glycyl lysine isopeptide (Lys-Gly) (interchain with G-Cter in SUMO2) cross-link involves residue Lys-11. A Phosphotyrosine modification is found at Tyr-63. Ser-71 carries the phosphoserine modification. Lys-76 bears the N6-succinyllysine mark. Ser-123 is subject to Phosphoserine. Glycyl lysine isopeptide (Lys-Gly) (interchain with G-Cter in SUMO2) cross-links involve residues Lys-128 and Lys-170.

Belongs to the eukaryotic ribosomal protein eL20 family. Component of the large ribosomal subunit. Binds IPO9 with high affinity.

It localises to the cytoplasm. Its function is as follows. Component of the large ribosomal subunit. The ribosome is a large ribonucleoprotein complex responsible for the synthesis of proteins in the cell. This chain is Large ribosomal subunit protein eL20 (RPL18A), found in Oryctolagus cuniculus (Rabbit).